The primary structure comprises 304 residues: Homoserine O-acetyltransferase (304 aa).

Cysteine 142 serves as the catalytic Acyl-thioester intermediate. Substrate-binding residues include lysine 163 and serine 192. Catalysis depends on histidine 235, which acts as the Proton acceptor. The active site involves glutamate 237. Arginine 249 contacts substrate.

The protein belongs to the MetA family.

Its subcellular location is the cytoplasm. The enzyme catalyses L-homoserine + acetyl-CoA = O-acetyl-L-homoserine + CoA. Its pathway is amino-acid biosynthesis; L-methionine biosynthesis via de novo pathway; O-acetyl-L-homoserine from L-homoserine: step 1/1. Its function is as follows. Transfers an acetyl group from acetyl-CoA to L-homoserine, forming acetyl-L-homoserine. The protein is Homoserine O-acetyltransferase of Clostridium beijerinckii (strain ATCC 51743 / NCIMB 8052) (Clostridium acetobutylicum).